We begin with the raw amino-acid sequence, 183 residues long: Protein Syd (183 aa).

The protein belongs to the Syd family.

It localises to the cell inner membrane. Functionally, interacts with the SecY protein in vivo. May bind preferentially to an uncomplexed state of SecY, thus functioning either as a chelating agent for excess SecY in the cell or as a regulatory factor that negatively controls the translocase function. The sequence is that of Protein Syd from Aliivibrio fischeri (strain ATCC 700601 / ES114) (Vibrio fischeri).